The following is a 212-amino-acid chain: Ubiquitin-like protein MDY2 (212 aa).

Residues 74-152 (VHLTLKKIQA…TITVMIKPNP (79 aa)) form the Ubiquitin-like domain. Residues 150-177 (PNPTISKEPEAEKSTNSPAPAPPQELTV) form a disordered region.

In terms of assembly, interacts with GET4.

It localises to the cytoplasm. The protein localises to the cytosol. It is found in the nucleus. Functionally, required for efficient mating. Involved in the production of alpha-factor, the KAR9 and TUB1 location to the shmoo tip and nuclear migration into pheromone-induced shmoos. In Saccharomyces cerevisiae (strain ATCC 204508 / S288c) (Baker's yeast), this protein is Ubiquitin-like protein MDY2 (MDY2).